Here is a 443-residue protein sequence, read N- to C-terminus: Signal recognition particle 54 kDa protein (443 aa).

Residues 107-114 (GIQGSGKT), 189-193 (DTAGR), and 247-250 (TKLD) contribute to the GTP site.

It belongs to the GTP-binding SRP family. SRP54 subfamily. In terms of assembly, part of the signal recognition particle protein translocation system, which is composed of SRP and FtsY. Archaeal SRP consists of a 7S RNA molecule of 300 nucleotides and two protein subunits: SRP54 and SRP19.

The protein resides in the cytoplasm. The catalysed reaction is GTP + H2O = GDP + phosphate + H(+). Its function is as follows. Involved in targeting and insertion of nascent membrane proteins into the cytoplasmic membrane. Binds to the hydrophobic signal sequence of the ribosome-nascent chain (RNC) as it emerges from the ribosomes. The SRP-RNC complex is then targeted to the cytoplasmic membrane where it interacts with the SRP receptor FtsY. In Pyrococcus furiosus (strain ATCC 43587 / DSM 3638 / JCM 8422 / Vc1), this protein is Signal recognition particle 54 kDa protein.